A 208-amino-acid chain; its full sequence is 3-isopropylmalate dehydratase small subunit (208 aa).

It belongs to the LeuD family. LeuD type 1 subfamily. Heterodimer of LeuC and LeuD.

The catalysed reaction is (2R,3S)-3-isopropylmalate = (2S)-2-isopropylmalate. The protein operates within amino-acid biosynthesis; L-leucine biosynthesis; L-leucine from 3-methyl-2-oxobutanoate: step 2/4. In terms of biological role, catalyzes the isomerization between 2-isopropylmalate and 3-isopropylmalate, via the formation of 2-isopropylmaleate. In Cupriavidus necator (Alcaligenes eutrophus), this protein is 3-isopropylmalate dehydratase small subunit (leuD).